Here is a 201-residue protein sequence, read N- to C-terminus: Dephospho-CoA kinase (201 aa).

The region spanning 2–201 is the DPCK domain; the sequence is MIGLTGGIAS…KRWKVIPEDQ (200 aa). 10–15 contacts ATP; the sequence is ASGKSS.

The protein belongs to the CoaE family.

The protein localises to the cytoplasm. It carries out the reaction 3'-dephospho-CoA + ATP = ADP + CoA + H(+). The protein operates within cofactor biosynthesis; coenzyme A biosynthesis; CoA from (R)-pantothenate: step 5/5. Catalyzes the phosphorylation of the 3'-hydroxyl group of dephosphocoenzyme A to form coenzyme A. The protein is Dephospho-CoA kinase of Halalkalibacterium halodurans (strain ATCC BAA-125 / DSM 18197 / FERM 7344 / JCM 9153 / C-125) (Bacillus halodurans).